The sequence spans 291 residues: Elongation factor Ts (291 aa).

The segment at 80–83 (TDFV) is involved in Mg(2+) ion dislocation from EF-Tu.

It belongs to the EF-Ts family.

Its subcellular location is the cytoplasm. Associates with the EF-Tu.GDP complex and induces the exchange of GDP to GTP. It remains bound to the aminoacyl-tRNA.EF-Tu.GTP complex up to the GTP hydrolysis stage on the ribosome. The protein is Elongation factor Ts of Ligilactobacillus salivarius (strain UCC118) (Lactobacillus salivarius).